Consider the following 670-residue polypeptide: Probable potassium transport system protein Kup 1 (670 aa).

13 helical membrane-spanning segments follow: residues 14-34 (GAGF…SPLY), 58-78 (LSLI…WIAL), 101-121 (WLII…ALTP), 147-167 (LPIV…QRFG), 175-195 (FGPV…INLF), 196-216 (GDFS…LLSP), 220-240 (AGIF…ALYS), 252-272 (VSWP…GAWL), 294-314 (LIIF…QALI), 345-365 (LYIP…VVYF), 374-394 (AYGL…TVYL), 403-423 (VLVG…FAAS), and 427-447 (FMHG…VMAI).

It belongs to the HAK/KUP transporter (TC 2.A.72) family.

It is found in the cell membrane. The catalysed reaction is K(+)(in) + H(+)(in) = K(+)(out) + H(+)(out). Its function is as follows. Transport of potassium into the cell. Likely operates as a K(+):H(+) symporter. This is Probable potassium transport system protein Kup 1 from Lactococcus lactis subsp. lactis (strain IL1403) (Streptococcus lactis).